A 131-amino-acid polypeptide reads, in one-letter code: D-ribose pyranase (131 aa).

The active-site Proton donor is histidine 20. Residues aspartate 28, histidine 98, and 120 to 122 each bind substrate; that span reads YSN.

The protein belongs to the RbsD / FucU family. RbsD subfamily. As to quaternary structure, homodecamer.

It localises to the cytoplasm. The catalysed reaction is beta-D-ribopyranose = beta-D-ribofuranose. Its pathway is carbohydrate metabolism; D-ribose degradation; D-ribose 5-phosphate from beta-D-ribopyranose: step 1/2. Catalyzes the interconversion of beta-pyran and beta-furan forms of D-ribose. In Latilactobacillus sakei subsp. sakei (strain 23K) (Lactobacillus sakei subsp. sakei), this protein is D-ribose pyranase.